Consider the following 106-residue polypeptide: Small cardioactive peptide-related peptide (106 aa).

The signal sequence occupies residues 1–20 (MFCKHLSFVAITICFLLVLA). Residues 21–41 (KTENEIQQKNIKFDQRTWRNM) constitute a propeptide, amino-terminal spacer peptide. Gln52 carries the post-translational modification Glutamine amide. Residues 55–106 (SDNQPDYTCCGMPLTKYVGICPIGMECCPGLKKVLQKSGQRTIYSVCVADAY) constitute a propeptide, carboxy-terminal spacer peptide.

Expression is seen in the peripheral and central nervous systems in tissues such as the brain, the inferior buccal ganglion, the gastric ganglion, the olfactory lobe, the peduncle lobe and the optic lobe. Expression in the brain is distributed in the median inferior frontal lobe, the superior buccal lobe, the prebranchial lobe and the pedal lobe. Not expressed in the vasomotor lobe or the palliovisceral lobe that controls the cardiac system.

It is found in the secreted. In terms of biological role, evokes contractions in the radula protractor muscle, and may regulate feeding behavior and gut motility by controlling muscle contraction of the buccal mass. The polypeptide is Small cardioactive peptide-related peptide (Octopus vulgaris (Common octopus)).